A 174-amino-acid chain; its full sequence is UPF0316 protein lin1888 (174 aa).

The next 3 helical transmembrane spans lie at 4-24, 36-56, and 62-82; these read GIFIVATIFVVNILYVTIYTV, LAALSSVFEMIIYVVALSLVL, and IANVLAYAVGFGVGIIVGMKI.

Belongs to the UPF0316 family.

It is found in the cell membrane. In Listeria innocua serovar 6a (strain ATCC BAA-680 / CLIP 11262), this protein is UPF0316 protein lin1888.